We begin with the raw amino-acid sequence, 145 residues long: Large ribosomal subunit protein uL15 (145 aa).

A disordered region spans residues 20-54 (GRGMASGKGKTATRGHKGQNSRSGGGVRPGFEGGQ). The segment covering 42–52 (SGGGVRPGFEG) has biased composition (gly residues).

Belongs to the universal ribosomal protein uL15 family. Part of the 50S ribosomal subunit.

Its function is as follows. Binds to the 23S rRNA. The protein is Large ribosomal subunit protein uL15 of Mycoplasma mycoides subsp. mycoides SC (strain CCUG 32753 / NCTC 10114 / PG1).